The sequence spans 401 residues: O-methyltransferase mfmE (401 aa).

S-adenosyl-L-methionine is bound by residues 243-244 (GG) and Asp-268. His-308 serves as the catalytic Proton acceptor.

It belongs to the class I-like SAM-binding methyltransferase superfamily. Cation-independent O-methyltransferase family. COMT subfamily.

It functions in the pathway secondary metabolite biosynthesis; terpenoid biosynthesis. Functionally, O-methyltransferase; part of the gene cluster that mediates the biosynthesis of the phthalide-terpenoid hybrid 11'-O-desmethylfendlerol. Within the pathway, mfmE catalyzes the 7-O-methylation of the phthalide 5,7-dihydroxy-4-(hydroxymethyl)-6-methylphthalide to yield 5-hydroxy-4-(hydroxymethyl)-7-methoxy-6-methylphthalide. The biosynthesis of 11'-O-desmethylfendlerol begins with the NR-PKS mfmB that forms 3,5-dimethylorsellinic acid (DMOA), which is then transformed into the phthalide 5,7-dihydroxy-4-(hydroxymethyl)-6-methylphthalide by the cytochrome P450 monooxygenase mfmA and the hydrolase mfmC. Subsequently, the methyltransferase mfmE catalyzes 7-O-methylation to yield 5-hydroxy-4-(hydroxymethyl)-7-methoxy-6-methylphthalide, which undergoes C-3 hydroxylation by the cytochrome P450 monooxygenase mfmF. The resultant cyclopolic acid (2,5-dihydroxy-4-(hydroxymethyl)-7-methoxy-6-methylphthalide) is then farnesylated by the DMATS-type prenyltransferase mfmD to afford 5-O-farnesylcyclopolic acid. Finally, the Pyr4-family terpene cyclase mfmH cyclizes the farnesyl moiety of 5-O-farnesylcyclopolic acid into a drimane-like structure, thus completing the biosynthesis of 11'-O-desmethylfendlerol. This chain is O-methyltransferase mfmE, found in Annulohypoxylon moriforme (Filamentous fungus).